The following is a 914-amino-acid chain: Valine--tRNA ligase (914 aa).

Positions 45–55 match the 'HIGH' region motif; sequence PNVTGSLHMGH. The short motif at 538 to 542 is the 'KMSKS' region element; that stretch reads KMSKS. Residue Lys-541 participates in ATP binding. A coiled-coil region spans residues 847-914; the sequence is LVDLDALKGR…LARKRLADLS (68 aa).

This sequence belongs to the class-I aminoacyl-tRNA synthetase family. ValS type 1 subfamily. Monomer.

The protein localises to the cytoplasm. The catalysed reaction is tRNA(Val) + L-valine + ATP = L-valyl-tRNA(Val) + AMP + diphosphate. In terms of biological role, catalyzes the attachment of valine to tRNA(Val). As ValRS can inadvertently accommodate and process structurally similar amino acids such as threonine, to avoid such errors, it has a 'posttransfer' editing activity that hydrolyzes mischarged Thr-tRNA(Val) in a tRNA-dependent manner. This is Valine--tRNA ligase from Parasynechococcus marenigrum (strain WH8102).